The primary structure comprises 353 residues: NADH-quinone oxidoreductase subunit H (353 aa).

The next 9 helical transmembrane spans lie at 8 to 28, 75 to 95, 108 to 128, 148 to 168, 179 to 199, 229 to 249, 258 to 278, 297 to 317, and 319 to 339; these read LLVYLVILFGFVIVSVLIFIW, GVFWLAPLVAFVPVMLMFAAI, IGILYILAVSSVTVIGIFMAG, VSYEIPLVLSILGVVMLTGSL, VPFILLQPLGFFVYLSAAMAE, LFYLMEYAEVLAVSAIATTLF, LHPVFWFIAKILLVFMFIIWV, FLLPLSLANLVITAFEILIAP, and INTAVLIGINIAVMFGLVLLF.

Belongs to the complex I subunit 1 family. As to quaternary structure, NDH-1 is composed of 14 different subunits. Subunits NuoA, H, J, K, L, M, N constitute the membrane sector of the complex.

The protein resides in the cell membrane. It carries out the reaction a quinone + NADH + 5 H(+)(in) = a quinol + NAD(+) + 4 H(+)(out). Its function is as follows. NDH-1 shuttles electrons from NADH, via FMN and iron-sulfur (Fe-S) centers, to quinones in the respiratory chain. The immediate electron acceptor for the enzyme in this species is believed to be ubiquinone. Couples the redox reaction to proton translocation (for every two electrons transferred, four hydrogen ions are translocated across the cytoplasmic membrane), and thus conserves the redox energy in a proton gradient. This subunit may bind ubiquinone. The protein is NADH-quinone oxidoreductase subunit H of Dehalococcoides mccartyi (strain CBDB1).